The sequence spans 755 residues: Proprotein convertase subtilisin/kexin type 4 (755 aa).

Positions 1-25 (MRPAPIALWLRLVLALALVRPRAVG) are cleaved as a signal peptide. The propeptide occupies 26–113 (WAPVRAPIYV…QQTLQRRVKR (88 aa)). The Peptidase S8 domain occupies 126 to 440 (QWYMNSEAQP…YGLLDAGLLV (315 aa)). Active-site charge relay system residues include Asp-158, His-199, and Ser-373. The region spanning 449–581 (TQPQRKCAVR…TLLLYGTAED (133 aa)) is the P/Homo B domain. 2 N-linked (GlcNAc...) asparagine glycosylation sites follow: Asn-475 and Asn-629. A helical membrane pass occupies residues 709–729 (AMVLSLLAVTLGGPVLCGMSM).

Belongs to the peptidase S8 family. Furin subfamily. The proPCSK4 form interacts with HSPA5; the interaction takes place at the endoplasmic reticulum. Post-translationally, N-glycosylated. Synthesized in the endoplasmic reticulum as a zymogen, is matured by autocatalytic cleavage between the prodomain and the catalytic domain. As to expression, placenta.

The protein resides in the membrane. The protein localises to the cytoplasmic vesicle. It localises to the secretory vesicle. Its subcellular location is the acrosome membrane. Proprotein convertase involved in the processing of hormone and other protein precursors at sites comprised of pairs of basic amino acid residues. In males, important for ADAM2 processing as well as other acrosomal proteins with roles in fertilization and critical for normal fertilization events such as sperm capacitation, acrosome reaction and binding of sperm to zona pellucida. Also plays a role in female fertility, involved in the regulation of trophoblast migration and placental development, may be through the proteolytical processing and activation of proteins such as IGF2. May also participate in folliculogenesis in the ovaries. This chain is Proprotein convertase subtilisin/kexin type 4, found in Homo sapiens (Human).